The sequence spans 97 residues: Exodeoxyribonuclease 7 small subunit (97 aa).

The segment at 1–22 is disordered; that stretch reads MAKTASPGDTAAGNGTEPLPDK.

Belongs to the XseB family. Heterooligomer composed of large and small subunits.

The protein localises to the cytoplasm. The enzyme catalyses Exonucleolytic cleavage in either 5'- to 3'- or 3'- to 5'-direction to yield nucleoside 5'-phosphates.. Its function is as follows. Bidirectionally degrades single-stranded DNA into large acid-insoluble oligonucleotides, which are then degraded further into small acid-soluble oligonucleotides. This Burkholderia vietnamiensis (strain G4 / LMG 22486) (Burkholderia cepacia (strain R1808)) protein is Exodeoxyribonuclease 7 small subunit.